Here is a 490-residue protein sequence, read N- to C-terminus: Betaine aldehyde dehydrogenase (490 aa).

Positions 26, 27, and 93 each coordinate K(+). 150–152 is a binding site for NAD(+); the sequence is GAW. Lysine 162 (charge relay system) is an active-site residue. 176–179 is an NAD(+) binding site; sequence KPSE. Valine 180 contacts K(+). 230–233 is a binding site for NAD(+); the sequence is GVAS. K(+) is bound at residue leucine 246. The active-site Proton acceptor is glutamate 252. The NAD(+) site is built by glycine 254, cysteine 286, and glutamate 387. Cysteine 286 serves as the catalytic Nucleophile. Residue cysteine 286 is modified to Cysteine sulfenic acid (-SOH). K(+)-binding residues include lysine 457 and glycine 460. The active-site Charge relay system is the glutamate 464.

Belongs to the aldehyde dehydrogenase family. Dimer of dimers. It depends on K(+) as a cofactor.

The catalysed reaction is betaine aldehyde + NAD(+) + H2O = glycine betaine + NADH + 2 H(+). It functions in the pathway amine and polyamine biosynthesis; betaine biosynthesis via choline pathway; betaine from betaine aldehyde: step 1/1. Its function is as follows. Involved in the biosynthesis of the osmoprotectant glycine betaine. Catalyzes the irreversible oxidation of betaine aldehyde to the corresponding acid. The sequence is that of Betaine aldehyde dehydrogenase from Escherichia coli (strain SE11).